We begin with the raw amino-acid sequence, 193 residues long: NADH-quinone oxidoreductase subunit B (193 aa).

4 residues coordinate [4Fe-4S] cluster: C72, C73, C137, and C167.

It belongs to the complex I 20 kDa subunit family. In terms of assembly, NDH-1 is composed of 14 different subunits. Subunits NuoB, C, D, E, F, and G constitute the peripheral sector of the complex. The cofactor is [4Fe-4S] cluster.

The protein resides in the cell inner membrane. It carries out the reaction a quinone + NADH + 5 H(+)(in) = a quinol + NAD(+) + 4 H(+)(out). Functionally, NDH-1 shuttles electrons from NADH, via FMN and iron-sulfur (Fe-S) centers, to quinones in the respiratory chain. The immediate electron acceptor for the enzyme in this species is believed to be ubiquinone. Couples the redox reaction to proton translocation (for every two electrons transferred, four hydrogen ions are translocated across the cytoplasmic membrane), and thus conserves the redox energy in a proton gradient. The chain is NADH-quinone oxidoreductase subunit B from Bartonella bacilliformis (strain ATCC 35685 / KC583 / Herrer 020/F12,63).